We begin with the raw amino-acid sequence, 132 residues long: Precursor of CEP10 (132 aa).

The first 19 residues, 1-19 (MKLFIIIVVTSLTISKVFD), serve as a signal peptide directing secretion. Positions 20–66 (KTLVTIEARNLRKMDRHEHFNANEDFVEAKMLKKIDNKNNLNNRCIN) are excised as a propeptide. Hydroxyproline occurs at positions 70 and 73. A propeptide spanning residues 82–91 (PKVINNKFTK) is cleaved from the precursor. 3 positions are modified to hydroxyproline: Pro-95, Pro-98, and Pro-102. Residues 107–116 (LRVVNNKFTN) constitute a propeptide that is removed on maturation. 3 positions are modified to hydroxyproline: Pro-120, Pro-123, and Pro-127. Pro-132 is a propeptide.

Belongs to the C-terminally encoded plant signaling peptide (CEP) family. In terms of assembly, interacts with CEP receptors (e.g. CEPR1 and CEPR2). In terms of processing, the mature small signaling peptide is generated by proteolytic processing of the longer precursor.

It is found in the secreted. It localises to the extracellular space. The protein localises to the apoplast. Its function is as follows. Extracellular signaling peptide that may regulate primary root growth rate and systemic nitrogen (N)-demand signaling. This chain is Precursor of CEP10, found in Arabidopsis thaliana (Mouse-ear cress).